A 92-amino-acid polypeptide reads, in one-letter code: Small ribosomal subunit protein uS19 (92 aa).

The protein belongs to the universal ribosomal protein uS19 family.

Its function is as follows. Protein S19 forms a complex with S13 that binds strongly to the 16S ribosomal RNA. The sequence is that of Small ribosomal subunit protein uS19 from Picosynechococcus sp. (strain ATCC 27264 / PCC 7002 / PR-6) (Agmenellum quadruplicatum).